Reading from the N-terminus, the 166-residue chain is Ribosome maturation factor RimM (166 aa).

Residues 94–165 (EGEYYLGKLI…TIELKVLDLL (72 aa)) enclose the PRC barrel domain.

Belongs to the RimM family. In terms of assembly, binds ribosomal protein uS19.

The protein resides in the cytoplasm. Its function is as follows. An accessory protein needed during the final step in the assembly of 30S ribosomal subunit, possibly for assembly of the head region. Essential for efficient processing of 16S rRNA. May be needed both before and after RbfA during the maturation of 16S rRNA. It has affinity for free ribosomal 30S subunits but not for 70S ribosomes. The chain is Ribosome maturation factor RimM from Borrelia garinii subsp. bavariensis (strain ATCC BAA-2496 / DSM 23469 / PBi) (Borreliella bavariensis).